The sequence spans 96 residues: Large ribosomal subunit protein uL23 (96 aa).

It belongs to the universal ribosomal protein uL23 family. In terms of assembly, part of the 50S ribosomal subunit. Contacts protein L29, and trigger factor when it is bound to the ribosome.

One of the early assembly proteins it binds 23S rRNA. One of the proteins that surrounds the polypeptide exit tunnel on the outside of the ribosome. Forms the main docking site for trigger factor binding to the ribosome. The protein is Large ribosomal subunit protein uL23 of Desulfovibrio desulfuricans (strain ATCC 27774 / DSM 6949 / MB).